A 413-amino-acid chain; its full sequence is Putative F-box/kelch-repeat protein At3g22870 (413 aa).

The 52-residue stretch at 2–53 (TLTISDLPRDLKKKIFSRIPLRYVRALRLTCKEWETLIKSRSLKIDEEESQM) folds into the F-box domain. Kelch repeat units follow at residues 156–202 (LLRF…IGVS) and 331–379 (KVFI…RRRQ).

This chain is Putative F-box/kelch-repeat protein At3g22870, found in Arabidopsis thaliana (Mouse-ear cress).